Consider the following 223-residue polypeptide: Ubiquitin-conjugating enzyme E2 S (223 aa).

M1 is modified (N-acetylmethionine). Residues 11–157 (HIIRLVYKEV…ARLLTEIHGG (147 aa)) form the UBC core domain. C95 acts as the Glycyl thioester intermediate in catalysis. The tract at residues 155-223 (HGGAGGPSGG…TDKKRALRRL (69 aa)) is disordered. Over residues 169 to 195 (GRATASGAAASTADPTAPGGPAGAEGP) the composition is skewed to low complexity. Phosphoserine is present on S174. Residues 209 to 223 (AAKKKTDKKRALRRL) show a composition bias toward basic residues.

The protein belongs to the ubiquitin-conjugating enzyme family. As to quaternary structure, component of the APC/C complex, composed of at least 14 distinct subunits that assemble into a complex of at least 19 chains with a combined molecular mass of around 1.2 MDa. Within this complex, directly interacts with ANAPC2 and ANAPC4. Interacts with CDC20, FZR1/CDH1 and VHL. Autoubiquitinated by the APC/C complex during G1, leading to its degradation by the proteasome.

The enzyme catalyses S-ubiquitinyl-[E1 ubiquitin-activating enzyme]-L-cysteine + [E2 ubiquitin-conjugating enzyme]-L-cysteine = [E1 ubiquitin-activating enzyme]-L-cysteine + S-ubiquitinyl-[E2 ubiquitin-conjugating enzyme]-L-cysteine.. It functions in the pathway protein modification; protein ubiquitination. Functionally, accepts ubiquitin from the E1 complex and catalyzes its covalent attachment to other proteins. Catalyzes 'Lys-11'-linked polyubiquitination. Acts as an essential factor of the anaphase promoting complex/cyclosome (APC/C), a cell cycle-regulated ubiquitin ligase that controls progression through mitosis. Acts by specifically elongating 'Lys-11'-linked polyubiquitin chains initiated by the E2 enzyme UBE2C/UBCH10 on APC/C substrates, enhancing the degradation of APC/C substrates by the proteasome and promoting mitotic exit. Also acts by elongating ubiquitin chains initiated by the E2 enzyme UBE2D1/UBCH5 in vitro; it is however unclear whether UBE2D1/UBCH5 acts as an E2 enzyme for the APC/C in vivo. Also involved in ubiquitination and subsequent degradation of VHL, resulting in an accumulation of HIF1A. In vitro able to promote polyubiquitination using all 7 ubiquitin Lys residues, except 'Lys-48'-linked polyubiquitination. The protein is Ubiquitin-conjugating enzyme E2 S (UBE2S) of Bos taurus (Bovine).